The sequence spans 237 residues: Oligoribonuclease, mitochondrial (237 aa).

Residues 1-25 (MLGGSLGSRLLRGVGGSHGRFGARG) constitute a mitochondrion transit peptide. The Exonuclease domain occupies 43–207 (MVWVDLEMTG…DDISESIKEL (165 aa)). Mg(2+) contacts are provided by D47 and E49. S92 is modified (phosphoserine). A Phosphotyrosine modification is found at Y122. A Mg(2+)-binding site is contributed by D147. An N6-acetyllysine modification is found at K173. The active site involves H194. D199 contacts Mg(2+).

Belongs to the oligoribonuclease family. As to quaternary structure, homodimer. Homotetramer. Requires Mn(2+) as cofactor. The cofactor is Mg(2+). As to expression, highly expressed in the heart and at lower levels in the lymph nodes, brain, lung, liver, spleen and thymus.

It localises to the mitochondrion intermembrane space. The protein resides in the mitochondrion matrix. The protein localises to the mitochondrion. Its subcellular location is the cytoplasm. It is found in the nucleus. With respect to regulation, inhibited by adenosine 3',5'-bisphosphate. Functionally, 3'-to-5'exoribonuclease that preferentially degrades DNA and RNA oligonucleotides composed of only two nucleotides. Binds and degrades longer oligonucleotides with a lower affinity. Plays dual roles in mitochondria, scavenging nanoRNAs (small RNA oligonucleotides of &lt;5 nucleotides) that are produced by the degradosome and clearing short RNAs that are generated by RNA processing. Essential for correct initiation of mitochondrial transcription, degrading mitochondrial RNA dinucleotides to prevent RNA-primed transcription at non-canonical sites in the mitochondrial genome. Essential for embryonic development. Its function is as follows. 3'-to-5'exoribonuclease that preferentially degrades DNA and RNA oligonucleotides composed of only two nucleotides. The chain is Oligoribonuclease, mitochondrial (REXO2) from Homo sapiens (Human).